Here is a 529-residue protein sequence, read N- to C-terminus: Arginine--tRNA ligase (529 aa).

The short motif at Ala-113–His-123 is the 'HIGH' region element.

The protein belongs to the class-I aminoacyl-tRNA synthetase family. As to quaternary structure, monomer.

The protein localises to the cytoplasm. The catalysed reaction is tRNA(Arg) + L-arginine + ATP = L-arginyl-tRNA(Arg) + AMP + diphosphate. The sequence is that of Arginine--tRNA ligase from Aliarcobacter butzleri (strain RM4018) (Arcobacter butzleri).